A 218-amino-acid chain; its full sequence is Small ribosomal subunit protein uS3c (218 aa).

The KH type-2 domain occupies 47–118; it reads VRRHMKNYSN…KLNISIAKVA (72 aa).

This sequence belongs to the universal ribosomal protein uS3 family. In terms of assembly, part of the 30S ribosomal subunit.

The protein localises to the plastid. Its subcellular location is the chloroplast. In Ginkgo biloba (Ginkgo), this protein is Small ribosomal subunit protein uS3c (rps3).